The chain runs to 483 residues: UDP-N-acetylmuramoyl-L-alanyl-D-glutamate--2,6-diaminopimelate ligase 2 (483 aa).

Residue Ser-30 coordinates UDP-N-acetyl-alpha-D-muramoyl-L-alanyl-D-glutamate. ATP is bound at residue 111–117; the sequence is GTNGKTT. UDP-N-acetyl-alpha-D-muramoyl-L-alanyl-D-glutamate contacts are provided by residues 156–157, Thr-183, and Arg-191; that span reads TT. Lys-223 bears the N6-carboxylysine mark. Meso-2,6-diaminopimelate contacts are provided by residues Arg-380, 404-407, Gly-456, and Glu-460; that span reads DNPR. The Meso-diaminopimelate recognition motif motif lies at 404–407; the sequence is DNPR.

It belongs to the MurCDEF family. MurE subfamily. It depends on Mg(2+) as a cofactor. Post-translationally, carboxylation is probably crucial for Mg(2+) binding and, consequently, for the gamma-phosphate positioning of ATP.

The protein localises to the cytoplasm. It carries out the reaction UDP-N-acetyl-alpha-D-muramoyl-L-alanyl-D-glutamate + meso-2,6-diaminopimelate + ATP = UDP-N-acetyl-alpha-D-muramoyl-L-alanyl-gamma-D-glutamyl-meso-2,6-diaminopimelate + ADP + phosphate + H(+). Its pathway is cell wall biogenesis; peptidoglycan biosynthesis. Its function is as follows. Catalyzes the addition of meso-diaminopimelic acid to the nucleotide precursor UDP-N-acetylmuramoyl-L-alanyl-D-glutamate (UMAG) in the biosynthesis of bacterial cell-wall peptidoglycan. The chain is UDP-N-acetylmuramoyl-L-alanyl-D-glutamate--2,6-diaminopimelate ligase 2 from Clostridium acetobutylicum (strain ATCC 824 / DSM 792 / JCM 1419 / IAM 19013 / LMG 5710 / NBRC 13948 / NRRL B-527 / VKM B-1787 / 2291 / W).